The primary structure comprises 153 residues: Cytochrome c-type biogenesis protein CcmE (153 aa).

The Cytoplasmic portion of the chain corresponds to 1–7; the sequence is MTRKKRR. Residues 8–28 traverse the membrane as a helical; Signal-anchor for type II membrane protein segment; it reads LYFVVLGMLALFAAAGLTLTA. Residues 29–153 are Periplasmic-facing; sequence FQDNLVFFYS…PPTAAAAPAP (125 aa). 2 residues coordinate heme: histidine 121 and tyrosine 125. A disordered region spans residues 132-153; the sequence is ESLKASGKWQHGPPTAAAAPAP. The segment covering 144-153 has biased composition (low complexity); that stretch reads PPTAAAAPAP.

Belongs to the CcmE/CycJ family.

The protein localises to the cell inner membrane. Functionally, heme chaperone required for the biogenesis of c-type cytochromes. Transiently binds heme delivered by CcmC and transfers the heme to apo-cytochromes in a process facilitated by CcmF and CcmH. The polypeptide is Cytochrome c-type biogenesis protein CcmE (Rhodospirillum rubrum (strain ATCC 11170 / ATH 1.1.1 / DSM 467 / LMG 4362 / NCIMB 8255 / S1)).